The primary structure comprises 108 residues: UPF0060 membrane protein SA2130 (108 aa).

A run of 4 helical transmembrane segments spans residues 5 to 25, 31 to 51, 60 to 80, and 86 to 106; these read IFIFILAGLCEIGGGYLIWLW, SSLVGLIGGAILMLYGVIATF, VYAAYGGVFIIMSLIFAMVVD, and KYDVIGAIICIVGVLVMLLPS.

Belongs to the UPF0060 family.

It localises to the cell membrane. The protein is UPF0060 membrane protein SA2130 of Staphylococcus aureus (strain N315).